We begin with the raw amino-acid sequence, 322 residues long: Probable L-asparaginase (322 aa).

The Asparaginase/glutaminase domain occupies 6-320 (PRLALIHTGG…EDIRRVFTQG (315 aa)). A disordered region spans residues 13 to 37 (TGGTIASRPSPDGRGLTPQTPPALP). The active-site O-isoaspartyl threonine intermediate is the Thr-16. Substrate-binding positions include Ser-54 and 85 to 86 (TD).

The protein belongs to the asparaginase 1 family.

The protein resides in the cytoplasm. It carries out the reaction L-asparagine + H2O = L-aspartate + NH4(+). This chain is Probable L-asparaginase (ansA), found in Deinococcus radiodurans (strain ATCC 13939 / DSM 20539 / JCM 16871 / CCUG 27074 / LMG 4051 / NBRC 15346 / NCIMB 9279 / VKM B-1422 / R1).